The primary structure comprises 395 residues: Tyrosine--tRNA ligase (395 aa).

The short motif at 42–51 (PTAPDIHLGH) is the 'HIGH' region element. The 'KMSKS' region motif lies at 226-230 (KMSKS). K229 is an ATP binding site. The region spanning 334 to 394 (IAISNLLKDA…GKRKFARITL (61 aa)) is the S4 RNA-binding domain.

The protein belongs to the class-I aminoacyl-tRNA synthetase family. TyrS type 2 subfamily. Homodimer.

It localises to the cytoplasm. The enzyme catalyses tRNA(Tyr) + L-tyrosine + ATP = L-tyrosyl-tRNA(Tyr) + AMP + diphosphate + H(+). Catalyzes the attachment of tyrosine to tRNA(Tyr) in a two-step reaction: tyrosine is first activated by ATP to form Tyr-AMP and then transferred to the acceptor end of tRNA(Tyr). This Photobacterium profundum (strain SS9) protein is Tyrosine--tRNA ligase.